The following is a 311-amino-acid chain: tRNA-cytidine(32) 2-sulfurtransferase (311 aa).

The PP-loop motif motif lies at 47-52 (SGGKDS). [4Fe-4S] cluster-binding residues include cysteine 122, cysteine 125, and cysteine 213.

The protein belongs to the TtcA family. As to quaternary structure, homodimer. Mg(2+) is required as a cofactor. It depends on [4Fe-4S] cluster as a cofactor.

The protein localises to the cytoplasm. The enzyme catalyses cytidine(32) in tRNA + S-sulfanyl-L-cysteinyl-[cysteine desulfurase] + AH2 + ATP = 2-thiocytidine(32) in tRNA + L-cysteinyl-[cysteine desulfurase] + A + AMP + diphosphate + H(+). Its pathway is tRNA modification. Catalyzes the ATP-dependent 2-thiolation of cytidine in position 32 of tRNA, to form 2-thiocytidine (s(2)C32). The sulfur atoms are provided by the cysteine/cysteine desulfurase (IscS) system. The sequence is that of tRNA-cytidine(32) 2-sulfurtransferase from Shigella boydii serotype 18 (strain CDC 3083-94 / BS512).